The sequence spans 213 residues: ATP phosphoribosyltransferase (213 aa).

This sequence belongs to the ATP phosphoribosyltransferase family. Short subfamily. In terms of assembly, heteromultimer composed of HisG and HisZ subunits.

The protein resides in the cytoplasm. The enzyme catalyses 1-(5-phospho-beta-D-ribosyl)-ATP + diphosphate = 5-phospho-alpha-D-ribose 1-diphosphate + ATP. It participates in amino-acid biosynthesis; L-histidine biosynthesis; L-histidine from 5-phospho-alpha-D-ribose 1-diphosphate: step 1/9. In terms of biological role, catalyzes the condensation of ATP and 5-phosphoribose 1-diphosphate to form N'-(5'-phosphoribosyl)-ATP (PR-ATP). Has a crucial role in the pathway because the rate of histidine biosynthesis seems to be controlled primarily by regulation of HisG enzymatic activity. This Thermoanaerobacter pseudethanolicus (strain ATCC 33223 / 39E) (Clostridium thermohydrosulfuricum) protein is ATP phosphoribosyltransferase.